The chain runs to 428 residues: Secernin-2 (428 aa).

Cys10 is a catalytic residue.

This sequence belongs to the peptidase C69 family. Secernin subfamily.

In Xenopus laevis (African clawed frog), this protein is Secernin-2 (scrn2).